The primary structure comprises 570 residues: Pantothenate kinase 2, mitochondrial (570 aa).

The transit peptide at Met-1 to Gly-31 directs the protein to the mitochondrion. 2 disordered regions span residues Ile-34–Arg-94 and Gly-127–Arg-198. The Nucleolar localization signal signature appears at Arg-82–Arg-94. Residues Arg-84–Ala-93 are compositionally biased toward basic residues. Over residues Pro-155–Arg-164 the composition is skewed to basic and acidic residues. Phosphoserine is present on residues Ser-168, Ser-169, and Ser-189. Residues Ser-168–Ala-179 show a composition bias toward low complexity. A Nuclear export signal motif is present at residues Leu-268–Leu-275. Glu-338 (proton acceptor) is an active-site residue. Positions 392, 395, and 407 each coordinate acetyl-CoA.

This sequence belongs to the type II pantothenate kinase family. Homodimer. Post-translationally, synthesized as a 62-kDa precursor which is proteolytically processed by the mitochondrial-processing peptidase (MPP) via a 59-kDa intermediate to yield the mature mitochondrial 48-kDa subunit. As to expression, expressed in the brain (at protein level). Ubiquitous. Highly expressed in the testis. Expressed in the umbilical vein endothelial cells (HUVEC).

It localises to the mitochondrion. The protein resides in the mitochondrion intermembrane space. The protein localises to the nucleus. It is found in the cytoplasm. The catalysed reaction is (R)-pantothenate + ATP = (R)-4'-phosphopantothenate + ADP + H(+). The protein operates within cofactor biosynthesis; coenzyme A biosynthesis; CoA from (R)-pantothenate: step 1/5. With respect to regulation, strongly inhibited by acetyl-CoA and its thioesters. Activated by palmitoylcarnitine. Its function is as follows. Mitochondrial isoform that catalyzes the phosphorylation of pantothenate to generate 4'-phosphopantothenate in the first and rate-determining step of coenzyme A (CoA) synthesis. Required for angiogenic activity of umbilical vein of endothelial cells (HUVEC). Cytoplasmic isoform that catalyzes the phosphorylation of pantothenate to generate 4'-phosphopantothenate in the first and rate-determining step of coenzyme A (CoA) synthesis. This Homo sapiens (Human) protein is Pantothenate kinase 2, mitochondrial (PANK2).